Consider the following 142-residue polypeptide: Phosphoribosyl-AMP cyclohydrolase (142 aa).

D92 lines the Mg(2+) pocket. Zn(2+) is bound at residue C93. Residues D94 and D96 each coordinate Mg(2+). Zn(2+) is bound by residues C109 and C116.

This sequence belongs to the PRA-CH family. As to quaternary structure, homodimer. The cofactor is Mg(2+). Zn(2+) serves as cofactor.

The protein localises to the cytoplasm. The catalysed reaction is 1-(5-phospho-beta-D-ribosyl)-5'-AMP + H2O = 1-(5-phospho-beta-D-ribosyl)-5-[(5-phospho-beta-D-ribosylamino)methylideneamino]imidazole-4-carboxamide. It functions in the pathway amino-acid biosynthesis; L-histidine biosynthesis; L-histidine from 5-phospho-alpha-D-ribose 1-diphosphate: step 3/9. Catalyzes the hydrolysis of the adenine ring of phosphoribosyl-AMP. This Alcanivorax borkumensis (strain ATCC 700651 / DSM 11573 / NCIMB 13689 / SK2) protein is Phosphoribosyl-AMP cyclohydrolase.